The sequence spans 213 residues: Reticulon-3 (213 aa).

The segment covering Met1–Ala16 has biased composition (polar residues). Residues Met1–Gly20 are disordered. The Reticulon domain occupies Val25 to Glu213. Helical transmembrane passes span Met45–Leu65 and Val154–Val174.

Homodimer.

It is found in the endoplasmic reticulum membrane. The protein resides in the golgi apparatus membrane. May be involved in membrane trafficking in the early secretory pathway. The sequence is that of Reticulon-3 (rtn3) from Xenopus tropicalis (Western clawed frog).